A 226-amino-acid chain; its full sequence is UPF0319 protein SO_1816 (226 aa).

An N-terminal signal peptide occupies residues Met1–Ala21.

It belongs to the UPF0319 family.

The polypeptide is UPF0319 protein SO_1816 (Shewanella oneidensis (strain ATCC 700550 / JCM 31522 / CIP 106686 / LMG 19005 / NCIMB 14063 / MR-1)).